The chain runs to 249 residues: ATP synthase subunit a, chloroplastic (249 aa).

Transmembrane regions (helical) follow at residues 40–60 (QVLI…VLAV), 97–117 (VPFI…GALL), 136–156 (INTT…AGLS), 201–221 (LVVV…VMFL), and 222–242 (GLFT…AYIG).

It belongs to the ATPase A chain family. As to quaternary structure, F-type ATPases have 2 components, CF(1) - the catalytic core - and CF(0) - the membrane proton channel. CF(1) has five subunits: alpha(3), beta(3), gamma(1), delta(1), epsilon(1). CF(0) has four main subunits: a, b, b' and c.

It is found in the plastid. The protein resides in the chloroplast thylakoid membrane. Its function is as follows. Key component of the proton channel; it plays a direct role in the translocation of protons across the membrane. In Draba nemorosa (Woodland whitlowgrass), this protein is ATP synthase subunit a, chloroplastic.